The following is a 325-amino-acid chain: Protein ORANGE-ORANGE, chloroplastic (325 aa).

The transit peptide at 1-54 (MDRVLVASYPINHLIRPHSFRIDYCWSTCFTSRLNSGKERQKLSSRWRWRSMAS) directs the protein to the chloroplast. The span at 53–71 (ASDSTDSSSSSSFAPSVES) shows a compositional bias: low complexity. The tract at residues 53-77 (ASDSTDSSSSSSFAPSVESDPSDKT) is disordered. 2 helical membrane-spanning segments follow: residues 164–184 (LYYV…GLLA) and 217–237 (IVAS…VVEV). The segment at 226–317 (VGVISALMVV…CTGMAMASEH (92 aa)) is CR-type-like. The stretch at 248–255 (CKYCLGTG) is one CXXCXGXG motif repeat. One copy of the CXXCXXXG motif repeat lies at 259–266 (CARCSNTG). A CXXCXGXG motif repeat occupies 292-299 (CQNCSGSG). The CXXCXXXG motif repeat unit spans residues 303–310 (CPTCLCTG).

This sequence belongs to the orange-like family.

The protein localises to the plastid. The protein resides in the chloroplast membrane. Functionally, triggers accumulation of carotenoids, mainly beta-carotene, in fruit flesh. The sequence is that of Protein ORANGE-ORANGE, chloroplastic from Cucumis melo (Muskmelon).